A 257-amino-acid polypeptide reads, in one-letter code: Gasdermin-like protein rcd-1-1 (257 aa).

This sequence belongs to the gasdermin family. In terms of assembly, heterooligomer; the heterooligomer with rcd-1-2 forms a ring-shaped pore complex when inserted in the membrane.

It localises to the cytoplasm. The protein localises to the cell membrane. Functionally, gasdermin-like protein involved in heterokaryon incompatibility, a process that ensures that during spontaneous vegetative cell fusion, only compatible cells from the same colony survive (non-self-recognition). In N.crassa, the rcd-1 locus exists as 2 incompatible alleles, rcd-1-1 (this entry) and rcd-1-2 (AC P0DW10). During the allorecognition process, forms a heterooligomer with rcd-1-2, thereby forming a functional gasdermin-like complex that binds to membranes and forms pores, triggering cell death. Binds negatively charged phospholipids, such as cardiolipin and phosphatidylserine. Also binds to phosphoinositides, preferentially to phosphatidylinositol-3-phosphate (PtdIns-3-P), PtdIns-5-P and PtdIns-3,5-P2. The sequence is that of Gasdermin-like protein rcd-1-1 from Neurospora crassa (strain ATCC 24698 / 74-OR23-1A / CBS 708.71 / DSM 1257 / FGSC 987).